Reading from the N-terminus, the 487-residue chain is Adenylosuccinate synthetase, chloroplastic (487 aa).

The transit peptide at 1 to 46 (MSLSTVNHAAAAAAAAGSGKSFSAAAPAAPSVRLPRTRAPAAAAVS) directs the protein to the chloroplast. GTP is bound by residues 74-80 (GDEGKGK) and 102-104 (GHT). The active-site Proton acceptor is the Asp-75. Residues Asp-75 and Gly-102 each contribute to the Mg(2+) site. IMP contacts are provided by residues 75 to 78 (DEGK), 100 to 103 (NAGH), Thr-192, Arg-206, Gln-286, Thr-301, and Arg-365. Catalysis depends on His-103, which acts as the Proton donor. 361-367 (TTTGRPR) serves as a coordination point for substrate. GTP contacts are provided by residues Arg-367, 393–395 (KLD), and 476–478 (GVG).

This sequence belongs to the adenylosuccinate synthetase family. In terms of assembly, homodimer. Mg(2+) is required as a cofactor.

The protein resides in the plastid. It is found in the chloroplast. The catalysed reaction is IMP + L-aspartate + GTP = N(6)-(1,2-dicarboxyethyl)-AMP + GDP + phosphate + 2 H(+). It participates in purine metabolism; AMP biosynthesis via de novo pathway; AMP from IMP: step 1/2. Plays an important role in the de novo pathway and in the salvage pathway of purine nucleotide biosynthesis. Catalyzes the first committed step in the biosynthesis of AMP from IMP. The polypeptide is Adenylosuccinate synthetase, chloroplastic (Oryza sativa subsp. indica (Rice)).